Reading from the N-terminus, the 198-residue chain is uncharacterized protein (198 aa).

Residues 40–111 form a disordered region; the sequence is GSALPPQAPT…LSRGAGQGAP (72 aa). Residues 60–74 are compositionally biased toward low complexity; it reads SSRTPGPRPPRSTLR.

This is an uncharacterized protein from Homo sapiens (Human).